Reading from the N-terminus, the 189-residue chain is Probable nicotinate-nucleotide adenylyltransferase (189 aa).

This sequence belongs to the NadD family.

The catalysed reaction is nicotinate beta-D-ribonucleotide + ATP + H(+) = deamido-NAD(+) + diphosphate. It participates in cofactor biosynthesis; NAD(+) biosynthesis; deamido-NAD(+) from nicotinate D-ribonucleotide: step 1/1. Functionally, catalyzes the reversible adenylation of nicotinate mononucleotide (NaMN) to nicotinic acid adenine dinucleotide (NaAD). This chain is Probable nicotinate-nucleotide adenylyltransferase, found in Hydrogenobaculum sp. (strain Y04AAS1).